The sequence spans 509 residues: Probable aspartic-type endopeptidase CTSD (509 aa).

The N-terminal stretch at 1-21 is a signal peptide; sequence MQFLWLCLLSAVTLQFTGTLA. The Peptidase A1 domain occupies 102–408; it reads YFSEVKVGSE…DFDKNRVGLA (307 aa). Asp120 is a catalytic residue. N-linked (GlcNAc...) asparagine glycosylation is present at Asn174. Residue Asp302 is part of the active site. N-linked (GlcNAc...) asparagine glycosylation is present at Asn361. Positions 451-489 are disordered; the sequence is NKAPSGGSPGLPAESGSDSTTNGEATNGATSSPNSSSSV. Residues 466 to 480 are compositionally biased toward polar residues; that stretch reads GSDSTTNGEATNGAT. N-linked (GlcNAc...) asparagine glycosylation is present at Asn484. Ser485 carries the GPI-anchor amidated serine lipid modification. Positions 486–509 are cleaved as a propeptide — removed in mature form; that stretch reads SSSVLTPTWLTLAVFFAIGSSLWS.

Belongs to the peptidase A1 family.

The protein localises to the cell membrane. Functionally, probable GPI-anchored aspartic-type endopeptidase which contributes to virulence. The polypeptide is Probable aspartic-type endopeptidase CTSD (CTSD) (Arthroderma benhamiae (strain ATCC MYA-4681 / CBS 112371) (Trichophyton mentagrophytes)).